We begin with the raw amino-acid sequence, 182 residues long: NADH-quinone oxidoreductase subunit I (182 aa).

4Fe-4S ferredoxin-type domains are found at residues 52–82 and 92–121; these read LTRD…LQKA and DFFR…LTPD. [4Fe-4S] cluster is bound by residues cysteine 62, cysteine 65, cysteine 68, cysteine 72, cysteine 101, cysteine 104, cysteine 107, and cysteine 111.

It belongs to the complex I 23 kDa subunit family. In terms of assembly, NDH-1 is composed of 13 different subunits. Subunits NuoA, H, J, K, L, M, N constitute the membrane sector of the complex. Requires [4Fe-4S] cluster as cofactor.

It is found in the cell inner membrane. The enzyme catalyses a quinone + NADH + 5 H(+)(in) = a quinol + NAD(+) + 4 H(+)(out). Functionally, NDH-1 shuttles electrons from NADH, via FMN and iron-sulfur (Fe-S) centers, to quinones in the respiratory chain. The immediate electron acceptor for the enzyme in this species is believed to be ubiquinone. Couples the redox reaction to proton translocation (for every two electrons transferred, four hydrogen ions are translocated across the cytoplasmic membrane), and thus conserves the redox energy in a proton gradient. This Pseudomonas fluorescens (strain ATCC BAA-477 / NRRL B-23932 / Pf-5) protein is NADH-quinone oxidoreductase subunit I.